A 282-amino-acid chain; its full sequence is ATP phosphoribosyltransferase (282 aa).

This sequence belongs to the ATP phosphoribosyltransferase family. Long subfamily. It depends on Mg(2+) as a cofactor.

Its subcellular location is the cytoplasm. The catalysed reaction is 1-(5-phospho-beta-D-ribosyl)-ATP + diphosphate = 5-phospho-alpha-D-ribose 1-diphosphate + ATP. It functions in the pathway amino-acid biosynthesis; L-histidine biosynthesis; L-histidine from 5-phospho-alpha-D-ribose 1-diphosphate: step 1/9. Its activity is regulated as follows. Feedback inhibited by histidine. Functionally, catalyzes the condensation of ATP and 5-phosphoribose 1-diphosphate to form N'-(5'-phosphoribosyl)-ATP (PR-ATP). Has a crucial role in the pathway because the rate of histidine biosynthesis seems to be controlled primarily by regulation of HisG enzymatic activity. The polypeptide is ATP phosphoribosyltransferase (Saccharopolyspora erythraea (strain ATCC 11635 / DSM 40517 / JCM 4748 / NBRC 13426 / NCIMB 8594 / NRRL 2338)).